The chain runs to 305 residues: Mas-related G-protein coupled receptor member A2B (305 aa).

Over 1–17 the chain is Extracellular; it reads MDETLPGSINIRILIPK. A helical membrane pass occupies residues 18-38; it reads LMIIIFGLVGLMGNAIVFWLL. At 39 to 53 the chain is on the cytoplasmic side; sequence GFHLRRNAFSVYILN. A helical transmembrane segment spans residues 54–74; sequence LALADFLFLLSSIIASTLFLL. At 75 to 78 the chain is on the extracellular side; the sequence is KVSY. The chain crosses the membrane as a helical span at residues 79-99; sequence LSIIFHLCFNTIMMVVYITGI. Residues 100–132 are Cytoplasmic-facing; that stretch reads SMLSAISTECCLSVLCPTWYRCHRPVHTSTVMC. A helical transmembrane segment spans residues 133 to 153; it reads AVIWVLSLLICILNSYFCAVL. The Extracellular portion of the chain corresponds to 154–167; that stretch reads HTRYDNDNECLATN. Residues 168–188 form a helical membrane-spanning segment; it reads IFTASYMIFLLVVLCLSSLAL. Residues 189–207 lie on the Cytoplasmic side of the membrane; it reads LARLFCGAGQMKLTRFHVT. Residues 208–228 form a helical membrane-spanning segment; that stretch reads ILLTLLVFLLCGLPFVIYCIL. The Extracellular segment spans residues 229–244; it reads LFKIKDDFHVLDVNFY. The chain crosses the membrane as a helical span at residues 245 to 265; that stretch reads LALEVLTAINSCANPIIYFFV. At 266–305 the chain is on the cytoplasmic side; it reads GSFRHQLKHQTLKMVLQSALQDTPETAENMVEMSSNKAEP.

Belongs to the G-protein coupled receptor 1 family. Mas subfamily. In terms of tissue distribution, expressed in a subset of sensory neurons that includes nociceptors. Expressed in the subclass of non-peptidergic sensory neurons that are IB4(+) and VR1(-).

It localises to the cell membrane. In terms of biological role, orphan receptor. May be a receptor for RFamide-family neuropeptides such as NPFF and NPAF, which are analgesic in vivo. May regulate nociceptor function and/or development, including the sensation or modulation of pain. This Mus musculus (Mouse) protein is Mas-related G-protein coupled receptor member A2B.